A 170-amino-acid chain; its full sequence is Large ribosomal subunit protein uL11 (170 aa).

This sequence belongs to the universal ribosomal protein uL11 family. As to quaternary structure, part of the ribosomal stalk of the 50S ribosomal subunit. Interacts with L10 and the large rRNA to form the base of the stalk. L10 forms an elongated spine to which L12 dimers bind in a sequential fashion forming a multimeric L10(L12)X complex.

Forms part of the ribosomal stalk which helps the ribosome interact with GTP-bound translation factors. This is Large ribosomal subunit protein uL11 from Saccharolobus islandicus (strain M.16.27) (Sulfolobus islandicus).